We begin with the raw amino-acid sequence, 115 residues long: Divalent-cation tolerance protein CutA (115 aa).

The Cu cation site is built by Cys19, His86, and His87.

Belongs to the CutA family. Homotrimer. Cu cation is required as a cofactor.

The protein localises to the cytoplasm. Involved in resistance toward heavy metals. The chain is Divalent-cation tolerance protein CutA from Salmonella agona (strain SL483).